The chain runs to 489 residues: Rhamnulokinase (489 aa).

A13–R17 provides a ligand contact to ATP. C68 and C222 are joined by a disulfide. Substrate is bound by residues G83 and H236–T238. D237 acts as the Proton acceptor in catalysis. ATP is bound at residue T259. N296 is a substrate binding site. Q304 contacts ATP. Cysteines 353 and 370 form a disulfide. G402 serves as a coordination point for ATP. A disulfide bridge links C413 with C417.

The protein belongs to the rhamnulokinase family. The cofactor is Mg(2+).

It carries out the reaction L-rhamnulose + ATP = L-rhamnulose 1-phosphate + ADP + H(+). The protein operates within carbohydrate degradation; L-rhamnose degradation; glycerone phosphate from L-rhamnose: step 2/3. Its function is as follows. Involved in the catabolism of L-rhamnose (6-deoxy-L-mannose). Catalyzes the transfer of the gamma-phosphate group from ATP to the 1-hydroxyl group of L-rhamnulose to yield L-rhamnulose 1-phosphate. In Salmonella heidelberg (strain SL476), this protein is Rhamnulokinase.